Reading from the N-terminus, the 97-residue chain is Intermembrane phospholipid transport system binding protein MlaB (97 aa).

The STAS domain maps to 1-97; the sequence is MSESLSWMQT…YNLPADVLPR (97 aa).

In terms of assembly, the complex is composed of two ATP-binding proteins (MlaF), two transmembrane proteins (MlaE), two cytoplasmic solute-binding proteins (MlaB) and six periplasmic solute-binding proteins (MlaD).

Its subcellular location is the cytoplasm. Functionally, part of the ABC transporter complex MlaFEDB, which is involved in a phospholipid transport pathway that maintains lipid asymmetry in the outer membrane by retrograde trafficking of phospholipids from the outer membrane to the inner membrane. MlaB plays critical roles in both the assembly and activity of the complex. May act by modulating MlaF structure and stability. The chain is Intermembrane phospholipid transport system binding protein MlaB from Escherichia coli (strain K12).